Here is a 365-residue protein sequence, read N- to C-terminus: 3-isopropylmalate dehydrogenase (365 aa).

Substrate is bound by residues arginine 96, arginine 106, arginine 134, and aspartate 224. The Mg(2+) site is built by aspartate 224, aspartate 248, and aspartate 252. NAD(+) is bound at residue 288-300 (GSAPTIAKQNIAN).

Belongs to the isocitrate and isopropylmalate dehydrogenases family. LeuB type 1 subfamily. In terms of assembly, homodimer. Mg(2+) serves as cofactor. Requires Mn(2+) as cofactor.

The protein localises to the cytoplasm. It carries out the reaction (2R,3S)-3-isopropylmalate + NAD(+) = 4-methyl-2-oxopentanoate + CO2 + NADH. It participates in amino-acid biosynthesis; L-leucine biosynthesis; L-leucine from 3-methyl-2-oxobutanoate: step 3/4. Functionally, catalyzes the oxidation of 3-carboxy-2-hydroxy-4-methylpentanoate (3-isopropylmalate) to 3-carboxy-4-methyl-2-oxopentanoate. The product decarboxylates to 4-methyl-2 oxopentanoate. In Dehalococcoides mccartyi (strain ATCC BAA-2266 / KCTC 15142 / 195) (Dehalococcoides ethenogenes (strain 195)), this protein is 3-isopropylmalate dehydrogenase.